The primary structure comprises 467 residues: Ribosomal protein uS12 methylthiotransferase RimO (467 aa).

The tract at residues 1 to 27 is disordered; that stretch reads MTSNPPDLRPDLAPKPTFGTAPRPDQP. The region spanning 27-137 is the MTTase N-terminal domain; it reads PTLGMVSLGC…VLDAVHAAVP (111 aa). [4Fe-4S] cluster contacts are provided by C36, C72, C101, C168, C172, and C175. In terms of domain architecture, Radical SAM core spans 154 to 397; it reads LTPRHFSYLK…MEKAQAISEA (244 aa). The TRAM domain maps to 400–467; the sequence is ASKVGQTLQV…GEYDLWGALR (68 aa).

Belongs to the methylthiotransferase family. RimO subfamily. Requires [4Fe-4S] cluster as cofactor.

The protein resides in the cytoplasm. It carries out the reaction L-aspartate(89)-[ribosomal protein uS12]-hydrogen + (sulfur carrier)-SH + AH2 + 2 S-adenosyl-L-methionine = 3-methylsulfanyl-L-aspartate(89)-[ribosomal protein uS12]-hydrogen + (sulfur carrier)-H + 5'-deoxyadenosine + L-methionine + A + S-adenosyl-L-homocysteine + 2 H(+). Its function is as follows. Catalyzes the methylthiolation of an aspartic acid residue of ribosomal protein uS12. This chain is Ribosomal protein uS12 methylthiotransferase RimO, found in Ruegeria sp. (strain TM1040) (Silicibacter sp.).